The primary structure comprises 112 residues: Nitrogen regulatory protein P-II (112 aa).

Residue Tyr-51 is modified to O-UMP-tyrosine.

The protein belongs to the P(II) protein family. In terms of assembly, homotrimer.

In nitrogen-limiting conditions, when the ratio of Gln to 2-ketoglutarate decreases, P-II is uridylylated to P-II-UMP. P-II-UMP allows the deadenylation of glutamine synthetase (GS), thus activating the enzyme. Conversely, in nitrogen excess P-II is deuridylated and promotes the adenylation of GS. P-II indirectly controls the transcription of the GS gene (glnA). P-II prevents NR-II-catalyzed conversion of NR-I to NR-I-phosphate, the transcriptional activator of glnA. When P-II is uridylylated to P-II-UMP, these events are reversed. This chain is Nitrogen regulatory protein P-II (glnB), found in Rhizobium meliloti (strain 1021) (Ensifer meliloti).